The sequence spans 37 residues: Large ribosomal subunit protein bL36A (37 aa).

It belongs to the bacterial ribosomal protein bL36 family.

The protein is Large ribosomal subunit protein bL36A of Haemophilus ducreyi (strain 35000HP / ATCC 700724).